Consider the following 950-residue polypeptide: A disintegrin and metalloproteinase with thrombospondin motifs 15 (950 aa).

A signal peptide spans 1–17 (MLLLGILTLAFAGRTAG). Residues 18–212 (GSEPEREVVV…SRRRSGRAKR (195 aa)) constitute a propeptide that is removed on maturation. An N-linked (GlcNAc...) asparagine glycan is attached at Asn-141. A disordered region spans residues 151–172 (SQGAHLLQRRGVPGGPSGDPTS). A Cysteine switch motif is present at residues 172 to 179 (SRCGVASG). Cys-174 is a Zn(2+) binding site. The 210-residue stretch at 218–427 (RYVETLVVAD…GHGDCLLDQP (210 aa)) folds into the Peptidase M12B domain. 11 disulfides stabilise this stretch: Cys-293/Cys-345, Cys-322/Cys-327, Cys-339/Cys-422, Cys-377/Cys-406, Cys-448/Cys-470, Cys-459/Cys-480, Cys-465/Cys-499, Cys-493/Cys-504, Cys-528/Cys-565, Cys-532/Cys-570, and Cys-543/Cys-555. Zn(2+) is bound at residue His-361. Residue Glu-362 is part of the active site. Residues His-365 and His-371 each coordinate Zn(2+). Positions 428-515 (SKPISLPEDL…ERHNLNKHRV (88 aa)) constitute a Disintegrin domain. In terms of domain architecture, TSP type-1 1 spans 516 to 571 (DGSWAKWDPYGPCSRTCGGGVQLARRQCTNPTPANGGKYCEGVRVKYRSCNLEPCP). Residues Asn-591, Asn-623, and Asn-679 are each glycosylated (N-linked (GlcNAc...) asparagine). The tract at residues 701–838 (AIPAGASSID…SNQVEQPDDR (138 aa)) is spacer. The segment at 798–822 (FYLPKEPREDKSSHPKDPRGPSVLH) is disordered. Over residues 802–816 (KEPREDKSSHPKDPR) the composition is skewed to basic and acidic residues. 2 consecutive TSP type-1 domains span residues 839-895 (PPAR…EPCP) and 896-949 (TWEL…VLRP).

Zn(2+) serves as cofactor. The precursor is cleaved by a furin endopeptidase. In terms of processing, glycosylated. Can be O-fucosylated by POFUT2 on a serine or a threonine residue found within the consensus sequence C1-X(2)-(S/T)-C2-G of the TSP type-1 repeat domains where C1 and C2 are the first and second cysteine residue of the repeat, respectively. Fucosylated repeats can then be further glycosylated by the addition of a beta-1,3-glucose residue by the glucosyltransferase, B3GALTL. Fucosylation mediates the efficient secretion of ADAMTS family members. Can be C-glycosylated with one or two mannose molecules on tryptophan residues within the consensus sequence W-X-X-W of the TPRs. Also N-glycosylated. These other glycosylations can also facilitate secretion. Expressed in fetal liver and kidney, but not in any of the adult tissues examined.

The protein resides in the secreted. It localises to the extracellular space. Its subcellular location is the extracellular matrix. It is found in the cell surface. Its function is as follows. Metalloprotease which has proteolytic activity against the proteoglycan VCAN, cleaving it at the 'Glu-1428-|-1429-Ala' site. Cleaves VCAN in the pericellular matrix surrounding myoblasts, facilitating myoblast contact and fusion which is required for skeletal muscle development and regeneration. The protein is A disintegrin and metalloproteinase with thrombospondin motifs 15 (ADAMTS15) of Homo sapiens (Human).